We begin with the raw amino-acid sequence, 1250 residues long: DNA-directed RNA polymerase subunit beta (1250 aa).

Residues 1139 to 1226 (GGAELAKPAP…DLFDEGDEDL (88 aa)) form a disordered region. Composition is skewed to acidic residues over residues 1155-1183 (ESGE…DPEE) and 1207-1226 (ADDD…DEDL).

This sequence belongs to the RNA polymerase beta chain family. As to quaternary structure, the RNAP catalytic core consists of 2 alpha, 1 beta, 1 beta' and 1 omega subunit. When a sigma factor is associated with the core the holoenzyme is formed, which can initiate transcription.

It carries out the reaction RNA(n) + a ribonucleoside 5'-triphosphate = RNA(n+1) + diphosphate. In terms of biological role, DNA-dependent RNA polymerase catalyzes the transcription of DNA into RNA using the four ribonucleoside triphosphates as substrates. The polypeptide is DNA-directed RNA polymerase subunit beta (Symbiobacterium thermophilum (strain DSM 24528 / JCM 14929 / IAM 14863 / T)).